Consider the following 149-residue polypeptide: 1,4-dihydroxy-2-naphthoyl-CoA hydrolase (149 aa).

Asp19 is an active-site residue.

Belongs to the 4-hydroxybenzoyl-CoA thioesterase family. DHNA-CoA hydrolase subfamily.

The enzyme catalyses 1,4-dihydroxy-2-naphthoyl-CoA + H2O = 1,4-dihydroxy-2-naphthoate + CoA + H(+). The protein operates within cofactor biosynthesis; phylloquinone biosynthesis. It participates in quinol/quinone metabolism; 1,4-dihydroxy-2-naphthoate biosynthesis; 1,4-dihydroxy-2-naphthoate from chorismate: step 7/7. In terms of biological role, catalyzes the hydrolysis of 1,4-dihydroxy-2-naphthoyl-CoA (DHNA-CoA) to 1,4-dihydroxy-2-naphthoate (DHNA), a reaction involved in phylloquinone (vitamin K1) biosynthesis. This chain is 1,4-dihydroxy-2-naphthoyl-CoA hydrolase, found in Synechococcus sp. (strain CC9902).